A 101-amino-acid chain; its full sequence is Gamma-secretase subunit PEN-2 (101 aa).

The Cytoplasmic portion of the chain corresponds to 1–17 (MNLERVSNEEKLNLCRK). The segment at residues 18–36 (YYLGGFAFLPFLWLVNIFW) is an intramembrane region (helical). Residues 37–57 (FFREAFIVPAYTEQSQIKGYV) lie on the Cytoplasmic side of the membrane. Residues 58–78 (WRSAVGFFLWVIVLSTWITIF) form a helical membrane-spanning segment. The Lumenal portion of the chain corresponds to 79–101 (QIYRPRWGALGDYLSFTIPLGTP).

The protein belongs to the PEN-2 family. As to quaternary structure, the functional gamma-secretase complex is composed of at least four polypeptides: a presenilin homodimer (PSEN1 or PSEN2), nicastrin (NCSTN), APH1 (APH1A or APH1B) and PSENEN.

The protein resides in the endoplasmic reticulum membrane. It localises to the golgi apparatus. Its subcellular location is the golgi stack membrane. The protein localises to the cell membrane. It is found in the membrane. In terms of biological role, essential subunit of the gamma-secretase complex, an endoprotease complex that catalyzes the intramembrane cleavage of integral membrane proteins such as Notch receptors and APP (amyloid-beta precursor protein). The gamma-secretase complex plays a role in Notch and Wnt signaling cascades and regulation of downstream processes via its role in processing key regulatory proteins, and by regulating cytosolic CTNNB1 levels. PSENEN modulates both endoproteolysis of presenilin and gamma-secretase activity. The chain is Gamma-secretase subunit PEN-2 (PSENEN) from Bos taurus (Bovine).